The primary structure comprises 460 residues: Muscarinic acetylcholine receptor M1 (460 aa).

Over 1 to 22 (MNTSVPPAVSPNITVLAPGKGP) the chain is Extracellular. Residues asparagine 2 and asparagine 12 are each glycosylated (N-linked (GlcNAc...) asparagine). Residues 23 to 48 (WQVAFIGITTGLLSLATVTGNLLVLI) form a helical membrane-spanning segment. Residues 49–62 (SFKVNTELKTVNNY) lie on the Cytoplasmic side of the membrane. Residues 63 to 84 (FLLSLACADLIIGTFSMNLYTT) form a helical membrane-spanning segment. Over 85–95 (YLLMGHWALGT) the chain is Extracellular. Residues 96–121 (LACDLWLALDYVASNASVMNLLLISF) traverse the membrane as a helical segment. A disulfide bond links cysteine 98 and cysteine 178. The Cytoplasmic portion of the chain corresponds to 122 to 142 (DRYFSVTRPLSYRAKRTPRRA). Residues 143–164 (ALMIGLAWLVSFVLWAPAILFW) form a helical membrane-spanning segment. Over 165 to 185 (QYLVGERTVLAGQCYIQFLSQ) the chain is Extracellular. A helical membrane pass occupies residues 186 to 209 (PIITFGTAMAAFYLPVTVMCTLYW). Residues 210–366 (RIYRETENRA…LVKEKKAART (157 aa)) lie on the Cytoplasmic side of the membrane. Disordered stretches follow at residues 225–257 (LQGS…SPPG), 274–297 (WKEE…EEPG), and 310–351 (EAQA…QLAK). Phosphothreonine is present on threonine 230. The segment covering 238–257 (SSSSERSQPGAEGSPESPPG) has biased composition (low complexity). The residue at position 254 (serine 254) is a Phosphoserine. Positions 328–343 (RPTKKGRDRGGKGQKP) are enriched in basic residues. The helical transmembrane segment at 367–390 (LSAILLAFILTWTPYNIMVLVSTF) threads the bilayer. Over 391–397 (CKDCVPE) the chain is Extracellular. A helical membrane pass occupies residues 398–420 (TLWELGYWLCYVNSTVNPMCYAL). Residues 421 to 460 (CNKAFRDTFRLLLLCRWDKRRWRKIPKRPGSVHRTPSRQC) lie on the Cytoplasmic side of the membrane. At serine 451 the chain carries Phosphoserine. Threonine 455 is subject to Phosphothreonine. Serine 457 is modified (phosphoserine).

This sequence belongs to the G-protein coupled receptor 1 family. Muscarinic acetylcholine receptor subfamily. CHRM1 sub-subfamily. Interacts with GPRASP2. Interacts with TMEM147.

It localises to the cell membrane. Its subcellular location is the postsynaptic cell membrane. Functionally, the muscarinic acetylcholine receptor mediates various cellular responses, including inhibition of adenylate cyclase, breakdown of phosphoinositides and modulation of potassium channels through the action of G proteins. Primary transducing effect is Pi turnover. The sequence is that of Muscarinic acetylcholine receptor M1 (Chrm1) from Mus musculus (Mouse).